We begin with the raw amino-acid sequence, 396 residues long: Elongation factor Tu (396 aa).

One can recognise a tr-type G domain in the interval 10–206 (KPHCNIGTIG…NVDEYIPQPE (197 aa)). Positions 19-26 (GHVDHGKT) are G1. 19-26 (GHVDHGKT) lines the GTP pocket. A Mg(2+)-binding site is contributed by Thr26. The G2 stretch occupies residues 60–64 (GITIS). Residues 81–84 (DCPG) form a G3 region. Residues 81 to 85 (DCPGH) and 136 to 139 (NKCD) each bind GTP. Residues 136–139 (NKCD) form a G4 region. A G5 region spans residues 174–176 (SAL).

This sequence belongs to the TRAFAC class translation factor GTPase superfamily. Classic translation factor GTPase family. EF-Tu/EF-1A subfamily. Monomer.

It localises to the cytoplasm. The enzyme catalyses GTP + H2O = GDP + phosphate + H(+). Its function is as follows. GTP hydrolase that promotes the GTP-dependent binding of aminoacyl-tRNA to the A-site of ribosomes during protein biosynthesis. The polypeptide is Elongation factor Tu (Bradyrhizobium sp. (strain BTAi1 / ATCC BAA-1182)).